The following is a 363-amino-acid chain: UDP-3-O-acylglucosamine N-acyltransferase (363 aa).

The Proton acceptor role is filled by histidine 266.

It belongs to the transferase hexapeptide repeat family. LpxD subfamily. In terms of assembly, homotrimer.

The catalysed reaction is a UDP-3-O-[(3R)-3-hydroxyacyl]-alpha-D-glucosamine + a (3R)-hydroxyacyl-[ACP] = a UDP-2-N,3-O-bis[(3R)-3-hydroxyacyl]-alpha-D-glucosamine + holo-[ACP] + H(+). It participates in bacterial outer membrane biogenesis; LPS lipid A biosynthesis. Catalyzes the N-acylation of UDP-3-O-acylglucosamine using 3-hydroxyacyl-ACP as the acyl donor. Is involved in the biosynthesis of lipid A, a phosphorylated glycolipid that anchors the lipopolysaccharide to the outer membrane of the cell. The polypeptide is UDP-3-O-acylglucosamine N-acyltransferase (Bordetella pertussis (strain Tohama I / ATCC BAA-589 / NCTC 13251)).